The chain runs to 352 residues: Biotin synthase (352 aa).

The 219-residue stretch at 44-262 (NRVQVSTLLS…LAVARILMPK (219 aa)) folds into the Radical SAM core domain. Residues cysteine 59, cysteine 63, and cysteine 66 each coordinate [4Fe-4S] cluster. Residues cysteine 103, cysteine 134, cysteine 194, and arginine 266 each contribute to the [2Fe-2S] cluster site.

This sequence belongs to the radical SAM superfamily. Biotin synthase family. Homodimer. It depends on [4Fe-4S] cluster as a cofactor. [2Fe-2S] cluster serves as cofactor.

The enzyme catalyses (4R,5S)-dethiobiotin + (sulfur carrier)-SH + 2 reduced [2Fe-2S]-[ferredoxin] + 2 S-adenosyl-L-methionine = (sulfur carrier)-H + biotin + 2 5'-deoxyadenosine + 2 L-methionine + 2 oxidized [2Fe-2S]-[ferredoxin]. It participates in cofactor biosynthesis; biotin biosynthesis; biotin from 7,8-diaminononanoate: step 2/2. In terms of biological role, catalyzes the conversion of dethiobiotin (DTB) to biotin by the insertion of a sulfur atom into dethiobiotin via a radical-based mechanism. The sequence is that of Biotin synthase from Pseudomonas putida (strain ATCC 47054 / DSM 6125 / CFBP 8728 / NCIMB 11950 / KT2440).